The sequence spans 295 residues: Ent-pimara-9(11),15-diene synthase (295 aa).

The protein belongs to the terpene synthase family. As to quaternary structure, monomer. A divalent metal cation serves as cofactor.

It catalyses the reaction ent-copalyl diphosphate = ent-pimara-9(11),15-diene + diphosphate. The protein operates within antibiotic biosynthesis. Its function is as follows. Involved in viguiepinol biosynthesis. Catalyzes the conversion of copalyl diphosphate (ent-CDP) into pimara-9(11),15-diene (PMD). The chain is Ent-pimara-9(11),15-diene synthase from Streptomyces sp. (strain KO-3988).